The sequence spans 134 residues: Ion transport peptide-like (134 aa).

3 disulfides stabilise this stretch: Cys-62–Cys-98, Cys-78–Cys-94, and Cys-81–Cys-107.

The protein belongs to the arthropod CHH/MIH/GIH/VIH hormone family.

It localises to the secreted. The chain is Ion transport peptide-like from Schistocerca gregaria (Desert locust).